The following is a 166-amino-acid chain: Sperm-egg fusion protein TMEM95 (166 aa).

A signal peptide spans M1–A16. 4 cysteine pairs are disulfide-bonded: C17–C118, C20–C121, C105–C128, and C109–C134. Over C17 to R145 the chain is Extracellular. Residue N117 is glycosylated (N-linked (GlcNAc...) asparagine). The chain crosses the membrane as a helical span at residues I146–V165. A topological domain (cytoplasmic) is located at residue E166.

This sequence belongs to the TMEM95 family. In terms of assembly, does not interact with sperm-egg fusion proteins IZUMO1 or IZUMO1R/JUNO. In terms of processing, N-glycosylated. Detected in testis and brain with higher levels in brain than testis.

It localises to the cytoplasmic vesicle. The protein resides in the secretory vesicle. Its subcellular location is the acrosome membrane. Functionally, sperm protein required for fusion of sperm with the egg membrane during fertilization. The polypeptide is Sperm-egg fusion protein TMEM95 (Bos taurus (Bovine)).